We begin with the raw amino-acid sequence, 95 residues long: Co-chaperonin GroES (95 aa).

Over residues 12 to 22 (VKPSPAEEKTK) the composition is skewed to basic and acidic residues. Residues 12–38 (VKPSPAEEKTKGGLYIPDSGKEKPQHG) are disordered.

The protein belongs to the GroES chaperonin family. As to quaternary structure, heptamer of 7 subunits arranged in a ring. Interacts with the chaperonin GroEL.

It localises to the cytoplasm. Functionally, together with the chaperonin GroEL, plays an essential role in assisting protein folding. The GroEL-GroES system forms a nano-cage that allows encapsulation of the non-native substrate proteins and provides a physical environment optimized to promote and accelerate protein folding. GroES binds to the apical surface of the GroEL ring, thereby capping the opening of the GroEL channel. The chain is Co-chaperonin GroES from Chloroherpeton thalassium (strain ATCC 35110 / GB-78).